The primary structure comprises 377 residues: 4-hydroxy-3-methylbut-2-en-1-yl diphosphate synthase (flavodoxin) (377 aa).

Residues cysteine 275, cysteine 278, cysteine 310, and glutamate 317 each coordinate [4Fe-4S] cluster.

Belongs to the IspG family. It depends on [4Fe-4S] cluster as a cofactor.

It carries out the reaction (2E)-4-hydroxy-3-methylbut-2-enyl diphosphate + oxidized [flavodoxin] + H2O + 2 H(+) = 2-C-methyl-D-erythritol 2,4-cyclic diphosphate + reduced [flavodoxin]. The protein operates within isoprenoid biosynthesis; isopentenyl diphosphate biosynthesis via DXP pathway; isopentenyl diphosphate from 1-deoxy-D-xylulose 5-phosphate: step 5/6. In terms of biological role, converts 2C-methyl-D-erythritol 2,4-cyclodiphosphate (ME-2,4cPP) into 1-hydroxy-2-methyl-2-(E)-butenyl 4-diphosphate. This is 4-hydroxy-3-methylbut-2-en-1-yl diphosphate synthase (flavodoxin) from Ruegeria sp. (strain TM1040) (Silicibacter sp.).